The chain runs to 309 residues: Homoserine O-succinyltransferase (309 aa).

The Acyl-thioester intermediate role is filled by C142. The substrate site is built by K163 and S192. Residue H235 is the Proton acceptor of the active site. E237 is a catalytic residue. Residue R249 coordinates substrate.

This sequence belongs to the MetA family.

Its subcellular location is the cytoplasm. It carries out the reaction L-homoserine + succinyl-CoA = O-succinyl-L-homoserine + CoA. It functions in the pathway amino-acid biosynthesis; L-methionine biosynthesis via de novo pathway; O-succinyl-L-homoserine from L-homoserine: step 1/1. Its function is as follows. Transfers a succinyl group from succinyl-CoA to L-homoserine, forming succinyl-L-homoserine. This Citrobacter koseri (strain ATCC BAA-895 / CDC 4225-83 / SGSC4696) protein is Homoserine O-succinyltransferase.